The sequence spans 581 residues: Probable peptidoglycan D,D-transpeptidase PenA (581 aa).

A helical membrane pass occupies residues 28–48 (ISFVLMAIAVLFAGLIARGLY). The Acyl-ester intermediate role is filled by Ser-310.

Belongs to the transpeptidase family. FtsI subfamily.

The protein resides in the cell inner membrane. It carries out the reaction Preferential cleavage: (Ac)2-L-Lys-D-Ala-|-D-Ala. Also transpeptidation of peptidyl-alanyl moieties that are N-acyl substituents of D-alanine.. Its pathway is cell wall biogenesis; peptidoglycan biosynthesis. In terms of biological role, catalyzes cross-linking of the peptidoglycan cell wall at the division septum. The sequence is that of Probable peptidoglycan D,D-transpeptidase PenA from Neisseria meningitidis serogroup A / serotype 4A (strain DSM 15465 / Z2491).